A 460-amino-acid polypeptide reads, in one-letter code: Ecdysteroid UDP-glucosyltransferase (460 aa).

Positions 1-18 (MFISILLLALAVERILCA) are cleaved as a signal peptide.

The protein belongs to the UDP-glycosyltransferase family.

Catalyzes the transfer of glucose from UDP-glucose to ecdysteroids which are insect molting hormones. Expression of egt interferes with normal insect development and block molting. The polypeptide is Ecdysteroid UDP-glucosyltransferase (EGT) (Lacanobia oleracea granulosis virus (LoGV)).